Here is a 548-residue protein sequence, read N- to C-terminus: Protein swallow (548 aa).

Disordered regions lie at residues 67 to 109 (AKTC…GRSS), 184 to 206 (NCQTHSNSDSNYNSNSNNSSSSF), and 358 to 428 (FSSV…ELIS). A compositionally biased stretch (acidic residues) spans 79 to 91 (QEDEDDYDEDVDG). The span at 189–205 (SNSDSNYNSNSNNSSSS) shows a compositional bias: low complexity. 2 positions are modified to phosphoserine: Ser-362 and Ser-368. Polar residues predominate over residues 388 to 402 (APNNSETSQPSSNDS). Residues 406–420 (VEAHEEERPSSRRQW) show a composition bias toward basic and acidic residues. 6 positions are modified to phosphoserine: Ser-463, Ser-471, Ser-475, Ser-483, Ser-485, and Ser-487.

May be a homo- or heterodimer.

The protein resides in the nucleus. Has a role in localizing bicoid mRNA at the anterior margin of the oocyte during oogenesis, and a poorly characterized role in nuclear divisions in early embryogenesis. The sequence is that of Protein swallow (swa) from Drosophila melanogaster (Fruit fly).